The chain runs to 101 residues: Citrate lyase acyl carrier protein (101 aa).

At serine 14 the chain carries O-(phosphoribosyl dephospho-coenzyme A)serine.

This sequence belongs to the CitD family. In terms of assembly, oligomer with a subunit composition of (alpha,beta,gamma)6.

It is found in the cytoplasm. In terms of biological role, covalent carrier of the coenzyme of citrate lyase. The sequence is that of Citrate lyase acyl carrier protein from Streptococcus uberis (strain ATCC BAA-854 / 0140J).